The chain runs to 196 residues: UMP-CMP kinase (196 aa).

13–18 (GAGKGT) contacts ATP. Position 33 is a phosphoserine (Ser-33). The segment at 33 to 63 (SAGELLRDERKNPDSQYGELIEKYIKEGKIV) is NMP. Residue Arg-39 participates in a ribonucleoside 5'-phosphate binding. 2 positions are modified to N6-acetyllysine: Lys-43 and Lys-55. 61–63 (KIV) is an a ribonucleoside 5'-phosphate binding site. Residue Lys-73 forms a Glycyl lysine isopeptide (Lys-Gly) (interchain with G-Cter in SUMO2) linkage. 93-96 (GFPR) provides a ligand contact to a ribonucleoside 5'-phosphate. Asn-100 provides a ligand contact to CMP. N6-succinyllysine is present on Lys-106. Positions 133-143 (ERGKSSGRSDD) are LID. Arg-134 is a binding site for ATP. A ribonucleoside 5'-phosphate contacts are provided by Arg-140 and Arg-151. Lys-179 contacts ATP. Ser-180 carries the phosphoserine modification.

The protein belongs to the adenylate kinase family. UMP-CMP kinase subfamily. As to quaternary structure, monomer. Mg(2+) serves as cofactor. In terms of tissue distribution, ubiquitously expressed.

It localises to the nucleus. Its subcellular location is the cytoplasm. It carries out the reaction CMP + ATP = CDP + ADP. It catalyses the reaction dCMP + ATP = dCDP + ADP. The catalysed reaction is UMP + ATP = UDP + ADP. The enzyme catalyses a 2'-deoxyribonucleoside 5'-diphosphate + ATP = a 2'-deoxyribonucleoside 5'-triphosphate + ADP. It carries out the reaction a ribonucleoside 5'-diphosphate + ATP = a ribonucleoside 5'-triphosphate + ADP. Catalyzes the phosphorylation of pyrimidine nucleoside monophosphates at the expense of ATP. Plays an important role in de novo pyrimidine nucleotide biosynthesis. Has preference for UMP and CMP as phosphate acceptors. Also displays broad nucleoside diphosphate kinase activity. The sequence is that of UMP-CMP kinase from Homo sapiens (Human).